The sequence spans 244 residues: Ethylene-responsive transcription factor ERF013 (244 aa).

Positions 1 to 33 (MVKQELKIQVTTSSSSLSHSSSSSSSSTSALRH) are disordered. Positions 11 to 29 (TTSSSSLSHSSSSSSSSTS) are enriched in low complexity. Residues 42–99 (KYKGVRMRSWGSWVTEIRAPNQKTRIWLGSYSTAEAAARAYDAALLCLKGPKANLNFP) constitute a DNA-binding region (AP2/ERF). Residues 123-178 (QKVAAQAANSSSDHFTPPSDENDHDHDDGLDHHPSASSSAASSPPDDDHHNDDDGD) form a disordered region. Basic and acidic residues predominate over residues 143–156 (ENDHDHDDGLDHHP). Low complexity predominate over residues 157-166 (SASSSAASSP).

This sequence belongs to the AP2/ERF transcription factor family. ERF subfamily.

It is found in the nucleus. In terms of biological role, probably acts as a transcriptional activator. Binds to the GCC-box pathogenesis-related promoter element. May be involved in the regulation of gene expression by stress factors and by components of stress signal transduction pathways. This is Ethylene-responsive transcription factor ERF013 (ERF013) from Arabidopsis thaliana (Mouse-ear cress).